A 165-amino-acid chain; its full sequence is Deoxyuridine 5'-triphosphate nucleotidohydrolase (165 aa).

Substrate is bound by residues 66–68 (RSG), N79, 83–85 (TVD), and K93. Residues 134–165 (ETSRGAGGHGSSGGHASLTPGARSAARVAQEG) are disordered.

Belongs to the dUTPase family. Mg(2+) serves as cofactor.

The catalysed reaction is dUTP + H2O = dUMP + diphosphate + H(+). Its pathway is pyrimidine metabolism; dUMP biosynthesis; dUMP from dCTP (dUTP route): step 2/2. Functionally, this enzyme is involved in nucleotide metabolism: it produces dUMP, the immediate precursor of thymidine nucleotides and it decreases the intracellular concentration of dUTP so that uracil cannot be incorporated into DNA. The protein is Deoxyuridine 5'-triphosphate nucleotidohydrolase of Nocardia farcinica (strain IFM 10152).